A 368-amino-acid polypeptide reads, in one-letter code: tRNA(Met) cytidine acetate ligase (368 aa).

ATP-binding positions include Ile7 to Leu20, Gly96, Asn152, and Arg175.

It belongs to the TmcAL family.

It is found in the cytoplasm. It catalyses the reaction cytidine(34) in elongator tRNA(Met) + acetate + ATP = N(4)-acetylcytidine(34) in elongator tRNA(Met) + AMP + diphosphate. In terms of biological role, catalyzes the formation of N(4)-acetylcytidine (ac(4)C) at the wobble position of elongator tRNA(Met), using acetate and ATP as substrates. First activates an acetate ion to form acetyladenylate (Ac-AMP) and then transfers the acetyl group to tRNA to form ac(4)C34. This Streptococcus pyogenes serotype M3 (strain SSI-1) protein is tRNA(Met) cytidine acetate ligase.